Here is a 449-residue protein sequence, read N- to C-terminus: Serine--tRNA ligase (449 aa).

255-257 (TSE) provides a ligand contact to L-serine. 286–288 (RSE) provides a ligand contact to ATP. Glutamate 309 lines the L-serine pocket. 373-376 (EISS) contributes to the ATP binding site. Serine 409 serves as a coordination point for L-serine.

Belongs to the class-II aminoacyl-tRNA synthetase family. Type-1 seryl-tRNA synthetase subfamily. As to quaternary structure, homodimer. The tRNA molecule binds across the dimer.

It localises to the cytoplasm. The enzyme catalyses tRNA(Ser) + L-serine + ATP = L-seryl-tRNA(Ser) + AMP + diphosphate + H(+). It carries out the reaction tRNA(Sec) + L-serine + ATP = L-seryl-tRNA(Sec) + AMP + diphosphate + H(+). It participates in aminoacyl-tRNA biosynthesis; selenocysteinyl-tRNA(Sec) biosynthesis; L-seryl-tRNA(Sec) from L-serine and tRNA(Sec): step 1/1. Catalyzes the attachment of serine to tRNA(Ser). Is also able to aminoacylate tRNA(Sec) with serine, to form the misacylated tRNA L-seryl-tRNA(Sec), which will be further converted into selenocysteinyl-tRNA(Sec). The protein is Serine--tRNA ligase of Bordetella avium (strain 197N).